The chain runs to 892 residues: Integrator complex subunit 6 (892 aa).

Positions 3–227 (ILLFLIDTSA…QCLESLVQKV (225 aa)) constitute a VWFA domain. Positions 630–637 (MMIDEADE) match the Inhibitory loop motif. Disordered regions lie at residues 665-692 (MSPLLRRPQTPPIITNHVLGKGPTGTQG), 711-754 (VGGT…AAPD), and 771-793 (PDHTQNCEELSPPGQEGEMEVNE).

The protein belongs to the Integrator subunit 6 family. Component of the Integrator complex, composed of core subunits INTS1, INTS2, INTS3, INTS4, INTS5, INTS6, INTS7, INTS8, INTS9/RC74, INTS10, INTS11/CPSF3L, INTS12, INTS13, INTS14 and INTS15. The core complex associates with protein phosphatase 2A subunits PPP2CA and PPP2R1A, to form the Integrator-PP2A (INTAC) complex.

It is found in the nucleus. Its subcellular location is the chromosome. In terms of biological role, component of the integrator complex, a multiprotein complex that terminates RNA polymerase II (Pol II) transcription in the promoter-proximal region of genes. The integrator complex provides a quality checkpoint during transcription elongation by driving premature transcription termination of transcripts that are unfavorably configured for transcriptional elongation: the complex terminates transcription by (1) catalyzing dephosphorylation of the C-terminal domain (CTD) of Pol II subunit POLR2A/RPB1 and SUPT5H/SPT5, (2) degrading the exiting nascent RNA transcript via endonuclease activity and (3) promoting the release of Pol II from bound DNA. The integrator complex is also involved in terminating the synthesis of non-coding Pol II transcripts, such as enhancer RNAs (eRNAs), small nuclear RNAs (snRNAs), telomerase RNAs and long non-coding RNAs (lncRNAs). Within the integrator complex, INTS6 acts as a molecular adapter that promotes assembly of protein phosphatase 2A (PP2A) subunits to the integrator core complex, promoting recruitment of PP2A to transcription pause-release checkpoint. This Danio rerio (Zebrafish) protein is Integrator complex subunit 6 (ints6l).